A 294-amino-acid chain; its full sequence is MSISASMVKTLRERTGAGMMDCKQALEEANGDMEKAIDWLRQRGLSKASKKAGRATTEGLIGCQVLPGSTSAVLVEVMCETDFVSRDEVFKKFVDDIVSQLVANFHNNDVDLLDQPSGNKNLSIRDLLNETIATIGENIVIGRSIKMELTPGKNGMIGHYVHTNGKIAVLVELATETKETASSPKFQELAKNIAMQIAATAPLALNSESLDPLKIDREREVYRQKALEEGKPENMIEKIVEGAVKKYLKEVCLLDQPYIRDDKLSIAELIKKVSNEIGEPISIIEFVRIQLGEE.

The segment at 81–84 is involved in Mg(2+) ion dislocation from EF-Tu; it reads TDFV.

The protein belongs to the EF-Ts family.

Its subcellular location is the cytoplasm. Its function is as follows. Associates with the EF-Tu.GDP complex and induces the exchange of GDP to GTP. It remains bound to the aminoacyl-tRNA.EF-Tu.GTP complex up to the GTP hydrolysis stage on the ribosome. This is Elongation factor Ts from Lawsonia intracellularis (strain PHE/MN1-00).